Here is a 495-residue protein sequence, read N- to C-terminus: UDP-N-acetylmuramoyl-L-alanyl-D-glutamate--2,6-diaminopimelate ligase (495 aa).

Residues Leu27, Ser29, and 44 to 46 (HKA) each bind UDP-N-acetyl-alpha-D-muramoyl-L-alanyl-D-glutamate. 116–122 (GTNGKTT) serves as a coordination point for ATP. UDP-N-acetyl-alpha-D-muramoyl-L-alanyl-D-glutamate-binding positions include Asn157, 158 to 159 (TT), Ser185, Gln191, and Arg193. Lys225 carries the post-translational modification N6-carboxylysine. Residues Arg390, 414 to 417 (DNPR), Gly465, and Glu469 each bind meso-2,6-diaminopimelate. A Meso-diaminopimelate recognition motif motif is present at residues 414-417 (DNPR).

It belongs to the MurCDEF family. MurE subfamily. Requires Mg(2+) as cofactor. Carboxylation is probably crucial for Mg(2+) binding and, consequently, for the gamma-phosphate positioning of ATP.

It is found in the cytoplasm. The catalysed reaction is UDP-N-acetyl-alpha-D-muramoyl-L-alanyl-D-glutamate + meso-2,6-diaminopimelate + ATP = UDP-N-acetyl-alpha-D-muramoyl-L-alanyl-gamma-D-glutamyl-meso-2,6-diaminopimelate + ADP + phosphate + H(+). Its pathway is cell wall biogenesis; peptidoglycan biosynthesis. Its function is as follows. Catalyzes the addition of meso-diaminopimelic acid to the nucleotide precursor UDP-N-acetylmuramoyl-L-alanyl-D-glutamate (UMAG) in the biosynthesis of bacterial cell-wall peptidoglycan. The chain is UDP-N-acetylmuramoyl-L-alanyl-D-glutamate--2,6-diaminopimelate ligase from Pectobacterium atrosepticum (strain SCRI 1043 / ATCC BAA-672) (Erwinia carotovora subsp. atroseptica).